A 79-amino-acid chain; its full sequence is MAKSDIHPKWYPEAKVYCNGQVVMTVGSTKPELHVDVWSGNHPFYTGTQKIIDTEGRVERFLRKYGMSSTQTSGEQTKK.

The protein belongs to the bacterial ribosomal protein bL31 family. Type A subfamily. As to quaternary structure, part of the 50S ribosomal subunit.

Binds the 23S rRNA. This chain is Large ribosomal subunit protein bL31, found in Nostoc sp. (strain PCC 7120 / SAG 25.82 / UTEX 2576).